A 156-amino-acid chain; its full sequence is Ribosomal RNA large subunit methyltransferase H (156 aa).

Residues L73, G104, and 123–128 contribute to the S-adenosyl-L-methionine site; that span reads LSALTL.

The protein belongs to the RNA methyltransferase RlmH family. Homodimer.

It localises to the cytoplasm. The catalysed reaction is pseudouridine(1915) in 23S rRNA + S-adenosyl-L-methionine = N(3)-methylpseudouridine(1915) in 23S rRNA + S-adenosyl-L-homocysteine + H(+). In terms of biological role, specifically methylates the pseudouridine at position 1915 (m3Psi1915) in 23S rRNA. This Shewanella loihica (strain ATCC BAA-1088 / PV-4) protein is Ribosomal RNA large subunit methyltransferase H.